The chain runs to 409 residues: Putative competence-damage inducible protein (409 aa).

The protein belongs to the CinA family.

In Clostridium botulinum (strain Kyoto / Type A2), this protein is Putative competence-damage inducible protein.